The chain runs to 209 residues: Ribosomal RNA large subunit methyltransferase E (209 aa).

S-adenosyl-L-methionine-binding residues include glycine 63, tryptophan 65, aspartate 83, aspartate 99, and aspartate 124. Lysine 164 acts as the Proton acceptor in catalysis.

It belongs to the class I-like SAM-binding methyltransferase superfamily. RNA methyltransferase RlmE family.

Its subcellular location is the cytoplasm. The catalysed reaction is uridine(2552) in 23S rRNA + S-adenosyl-L-methionine = 2'-O-methyluridine(2552) in 23S rRNA + S-adenosyl-L-homocysteine + H(+). Specifically methylates the uridine in position 2552 of 23S rRNA at the 2'-O position of the ribose in the fully assembled 50S ribosomal subunit. In Pseudoalteromonas atlantica (strain T6c / ATCC BAA-1087), this protein is Ribosomal RNA large subunit methyltransferase E.